Consider the following 302-residue polypeptide: Protoheme IX farnesyltransferase (302 aa).

9 helical membrane-spanning segments follow: residues 26–46, 48–68, 98–118, 120–140, 148–168, 174–194, 221–241, 244–264, and 280–300; these read VVVL…PGQV, WVAL…AAAL, VLGF…LWIN, LTAA…TLYL, IVIG…AVTG, ALLL…ALAV, ILLY…TFMG, LYLA…VRLL, and IIYL…PVWL.

Belongs to the UbiA prenyltransferase family. Protoheme IX farnesyltransferase subfamily.

The protein resides in the cell inner membrane. The catalysed reaction is heme b + (2E,6E)-farnesyl diphosphate + H2O = Fe(II)-heme o + diphosphate. Its pathway is porphyrin-containing compound metabolism; heme O biosynthesis; heme O from protoheme: step 1/1. In terms of biological role, converts heme B (protoheme IX) to heme O by substitution of the vinyl group on carbon 2 of heme B porphyrin ring with a hydroxyethyl farnesyl side group. The sequence is that of Protoheme IX farnesyltransferase from Alkalilimnicola ehrlichii (strain ATCC BAA-1101 / DSM 17681 / MLHE-1).